The following is a 432-amino-acid chain: Adenylosuccinate synthetase (432 aa).

Residues 13-19 and 41-43 contribute to the GTP site; these read GDEGKGK and GHT. The active-site Proton acceptor is the Asp-14. Mg(2+) is bound by residues Asp-14 and Gly-41. Residues 14-17, 39-42, Thr-130, Arg-144, Gln-225, Thr-240, and Arg-304 contribute to the IMP site; these read DEGK and NAGH. The active-site Proton donor is His-42. A substrate-binding site is contributed by 300 to 306; sequence ATTGRKR. GTP is bound by residues Arg-306, 332–334, and 415–417; these read KLD and STG.

Belongs to the adenylosuccinate synthetase family. In terms of assembly, homodimer. Mg(2+) is required as a cofactor.

It localises to the cytoplasm. It carries out the reaction IMP + L-aspartate + GTP = N(6)-(1,2-dicarboxyethyl)-AMP + GDP + phosphate + 2 H(+). Its pathway is purine metabolism; AMP biosynthesis via de novo pathway; AMP from IMP: step 1/2. Functionally, plays an important role in the de novo pathway of purine nucleotide biosynthesis. Catalyzes the first committed step in the biosynthesis of AMP from IMP. This Tolumonas auensis (strain DSM 9187 / NBRC 110442 / TA 4) protein is Adenylosuccinate synthetase.